The sequence spans 203 residues: Outer-membrane lipoprotein carrier protein (203 aa).

A signal peptide spans 1–21 (MKKLAITCALLSGMVVSQVWA). The tract at residues 184 to 203 (DASKFTFTPPKGVTVDDQRK) is disordered.

The protein belongs to the LolA family. In terms of assembly, monomer.

The protein resides in the periplasm. In terms of biological role, participates in the translocation of lipoproteins from the inner membrane to the outer membrane. Only forms a complex with a lipoprotein if the residue after the N-terminal Cys is not an aspartate (The Asp acts as a targeting signal to indicate that the lipoprotein should stay in the inner membrane). This chain is Outer-membrane lipoprotein carrier protein, found in Klebsiella pneumoniae (strain 342).